Here is a 280-residue protein sequence, read N- to C-terminus: Acyl-[acyl-carrier-protein]--UDP-N-acetylglucosamine O-acyltransferase (280 aa).

It belongs to the transferase hexapeptide repeat family. LpxA subfamily. In terms of assembly, homotrimer.

The protein localises to the cytoplasm. It catalyses the reaction a (3R)-hydroxyacyl-[ACP] + UDP-N-acetyl-alpha-D-glucosamine = a UDP-3-O-[(3R)-3-hydroxyacyl]-N-acetyl-alpha-D-glucosamine + holo-[ACP]. The protein operates within glycolipid biosynthesis; lipid IV(A) biosynthesis; lipid IV(A) from (3R)-3-hydroxytetradecanoyl-[acyl-carrier-protein] and UDP-N-acetyl-alpha-D-glucosamine: step 1/6. Its function is as follows. Involved in the biosynthesis of lipid A, a phosphorylated glycolipid that anchors the lipopolysaccharide to the outer membrane of the cell. The polypeptide is Acyl-[acyl-carrier-protein]--UDP-N-acetylglucosamine O-acyltransferase (Chlamydia trachomatis serovar L2 (strain ATCC VR-902B / DSM 19102 / 434/Bu)).